Reading from the N-terminus, the 439-residue chain is Kinesin-like protein KIN-13 (439 aa).

Residue 1–5 (GSGKS) participates in ATP binding. Residues 1–240 (GSGKSFTMMH…LRYADRVKEL (240 aa)) enclose the Kinesin motor domain.

This sequence belongs to the TRAFAC class myosin-kinesin ATPase superfamily. Kinesin family. KIN-13 subfamily. As to quaternary structure, interacts with PLK. Post-translationally, phosphorylated by PLK.

The protein resides in the cytoplasm. Its subcellular location is the cytoskeleton. It localises to the cell projection. The protein localises to the cilium. It is found in the flagellum. The protein resides in the flagellum basal body. Its subcellular location is the flagellum axoneme. It localises to the spindle. The protein localises to the chromosome. It is found in the centromere. The protein resides in the kinetochore. Involved in cell cycle. Involved in formation of flagella, regulation of flagellar length, and formation of median bodies during interphase. Regulates flagellar length in all eight distal flagellar tips by promoting disassembly of the microtubules. Disassembles microtubules at the distal flagellar tips in a length-dependent manner in order to maintain different equilibrium lengths of the four flagellar pairs. Regulates interphase and mitotic microtubule dynamics. Regulates microtubule disassembly dynamics of the dual mitotic spindles and the median body. The chain is Kinesin-like protein KIN-13 from Giardia intestinalis (Giardia lamblia).